A 131-amino-acid chain; its full sequence is DCPSDWSSYDQYCYRVFKRIQTWEDAERFCSEQANDGHLVSIESAGEADFVTQLVSENIRSEKHYVWIGLRVQGKGQQCSSEWSDGSSVHYDNLQENKTRKCYGLEKRAEFRTWSNVYCGHEYPFVCKFXR.

A C-type lectin domain is found at 1–131 (DCPSDWSSYD…EYPFVCKFXR (131 aa)). 3 disulfides stabilise this stretch: Cys-2–Cys-13, Cys-30–Cys-127, and Cys-102–Cys-119.

This sequence belongs to the snaclec family. Heterotetramer of the subunits alpha, alpha', beta and beta'; disulfide-linked. As to expression, expressed by the venom gland.

The protein resides in the secreted. Its function is as follows. Potent platelet activator that aggregates platelets via both GPIbalpha (GP1BA) and GPVI (GP6). Induces a tyrosine phosphorylation profile in platelets that resembles this produced by collagen, involving the time dependent tyrosine phosphorylation of Fc receptor gamma chain (FCGR1A), phospholipase Cgamma2 (PLCG2), and LAT. This is Snaclec alboaggregin-A subunit alpha from Trimeresurus albolabris (White-lipped pit viper).